The following is a 567-amino-acid chain: Oxygen-dependent choline dehydrogenase (567 aa).

6–35 (DYIIVGAGSAGNTLATRLTEDEGVTVLLLE) contacts FAD. Histidine 475 serves as the catalytic Proton acceptor.

It belongs to the GMC oxidoreductase family. The cofactor is FAD.

It carries out the reaction choline + A = betaine aldehyde + AH2. It catalyses the reaction betaine aldehyde + NAD(+) + H2O = glycine betaine + NADH + 2 H(+). Its pathway is amine and polyamine biosynthesis; betaine biosynthesis via choline pathway; betaine aldehyde from choline (cytochrome c reductase route): step 1/1. Its function is as follows. Involved in the biosynthesis of the osmoprotectant glycine betaine. Catalyzes the oxidation of choline to betaine aldehyde and betaine aldehyde to glycine betaine at the same rate. The chain is Oxygen-dependent choline dehydrogenase from Pseudomonas fluorescens (strain SBW25).